A 345-amino-acid polypeptide reads, in one-letter code: DNA N(6)-methyladenine demethylase ALKBH1A (345 aa).

Substrate-binding positions include W179 and 186–188 (FDW). Residues 225–345 (RPEGAIVNYF…RININIRQVF (121 aa)) enclose the Fe2OG dioxygenase domain. 232–234 (NYF) is a binding site for 2-oxoglutarate. 3 residues coordinate Fe cation: H243, D245, and H299. A 2-oxoglutarate-binding site is contributed by 336–342 (RININIR).

The protein belongs to the alkB family. It depends on Fe(2+) as a cofactor. In terms of tissue distribution, mostly expressed in siliques, to a lower extent in roots, seedlings and rosette leaves, but barely in cauline leaves, stems and flowers.

It is found in the nucleus. It localises to the cytoplasm. It carries out the reaction an N(6)-methyl-2'-deoxyadenosine in DNA + 2-oxoglutarate + O2 = a 2'-deoxyadenosine in DNA + formaldehyde + succinate + CO2. Its function is as follows. Dioxygenase that catalyzes DNA N(6)-methyladenine (6 mA) demethylation to modulate gene expression and regulate seed germination. This is DNA N(6)-methyladenine demethylase ALKBH1A from Arabidopsis thaliana (Mouse-ear cress).